Here is an 88-residue protein sequence, read N- to C-terminus: ATP synthase F(0) complex subunit f, mitochondrial (88 aa).

Alanine 2 bears the N-acetylalanine mark. Serine 3 is subject to Phosphoserine. Lysine 16 carries the N6-acetyllysine modification. A helical transmembrane segment spans residues 62–79; the sequence is MVLAAYVFLNYCRSYKEL.

In terms of assembly, component of the ATP synthase complex composed at least of ATP5F1A/subunit alpha, ATP5F1B/subunit beta, ATP5MC1/subunit c (homooctomer), MT-ATP6/subunit a, MT-ATP8/subunit 8, ATP5ME/subunit e, ATP5MF/subunit f, ATP5MG/subunit g, ATP5MK/subunit k, ATP5MJ/subunit j, ATP5F1C/subunit gamma, ATP5F1D/subunit delta, ATP5F1E/subunit epsilon, ATP5PF/subunit F6, ATP5PB/subunit b, ATP5PD/subunit d, ATP5PO/subunit OSCP. ATP synthase complex consists of a soluble F(1) head domain (subunits alpha(3) and beta(3)) - the catalytic core - and a membrane F(0) domain - the membrane proton channel (subunits c, a, 8, e, f, g, k and j). These two domains are linked by a central stalk (subunits gamma, delta, and epsilon) rotating inside the F1 region and a stationary peripheral stalk (subunits F6, b, d, and OSCP).

It localises to the mitochondrion. The protein resides in the mitochondrion inner membrane. In terms of biological role, subunit f, of the mitochondrial membrane ATP synthase complex (F(1)F(0) ATP synthase or Complex V) that produces ATP from ADP in the presence of a proton gradient across the membrane which is generated by electron transport complexes of the respiratory chain. ATP synthase complex consist of a soluble F(1) head domain - the catalytic core - and a membrane F(1) domain - the membrane proton channel. These two domains are linked by a central stalk rotating inside the F(1) region and a stationary peripheral stalk. During catalysis, ATP synthesis in the catalytic domain of F(1) is coupled via a rotary mechanism of the central stalk subunits to proton translocation. In vivo, can only synthesize ATP although its ATP hydrolase activity can be activated artificially in vitro. Part of the complex F(0) domain. In Bos taurus (Bovine), this protein is ATP synthase F(0) complex subunit f, mitochondrial.